A 46-amino-acid chain; its full sequence is Photosystem II reaction center protein K (46 aa).

Residues 1–9 (MLTLLNTFA) constitute a propeptide that is removed on maturation. Residues 25–45 (LPLIPLFFFLLVFVWQAAVGF) form a helical membrane-spanning segment.

The protein belongs to the PsbK family. As to quaternary structure, PSII is composed of 1 copy each of membrane proteins PsbA, PsbB, PsbC, PsbD, PsbE, PsbF, PsbH, PsbI, PsbJ, PsbK, PsbL, PsbM, PsbT, PsbX, PsbY, Psb30/Ycf12, peripheral proteins PsbO, CyanoQ (PsbQ), PsbU, PsbV and a large number of cofactors. It forms dimeric complexes.

It localises to the cellular thylakoid membrane. In terms of biological role, one of the components of the core complex of photosystem II (PSII). PSII is a light-driven water:plastoquinone oxidoreductase that uses light energy to abstract electrons from H(2)O, generating O(2) and a proton gradient subsequently used for ATP formation. It consists of a core antenna complex that captures photons, and an electron transfer chain that converts photonic excitation into a charge separation. In Prochlorococcus marinus (strain MIT 9515), this protein is Photosystem II reaction center protein K.